The sequence spans 411 residues: MATAGVAPASGIVDVNASSAIAVDKLPDEILGMRIKDDKEMEAHVVDGNSTEAGHVIVTTIGGKNGQPKQTISYMAERAVGQGSFGVVFQAKCLETGETVAIKKVLQDKRYKNRELQTMRLLDHPNVVTLKHCFFSTTEKDELYLNLVLEFVPETVHRVIRHYSKMNQRMPLIYVKLYSYQICRSLAYIHNCVGVSHRDIKPQNLLVNPHTHQLKLCDFGSAKVLVKGEPNISYICSRYYRAPELIFGATEYTSAIDIWSAGCVLGELLLGQPLFPGASGVDQLVEIIKVLGTPTREEIKCMNPNYTEFKFPQIKAHPWHKIFRKRMPPEAVDLVSRLLQYSPNLRSTALEALVHPFFDELRDPNTRLPNGRHLPPLFNFKANELKGVPAEMLVKLVPSHARKQCSLFASS.

Residues 74–358 (YMAERAVGQG…ALEALVHPFF (285 aa)) form the Protein kinase domain. Residues 80 to 88 (VGQGSFGVV) and Lys-103 each bind ATP. Asp-199 serves as the catalytic Proton acceptor. Tyr-234 is modified (phosphotyrosine).

It belongs to the protein kinase superfamily. CMGC Ser/Thr protein kinase family. GSK-3 subfamily. Absent in leaves and petioles while a moderate expression is seen in the stems, roots, and nodes.

It carries out the reaction L-seryl-[protein] + ATP = O-phospho-L-seryl-[protein] + ADP + H(+). The catalysed reaction is L-threonyl-[protein] + ATP = O-phospho-L-threonyl-[protein] + ADP + H(+). The polypeptide is Glycogen synthase kinase-3 homolog MsK-2 (MSK-2) (Medicago sativa (Alfalfa)).